The chain runs to 127 residues: Fatty acid-binding protein, liver (127 aa).

Methionine 1 carries the post-translational modification N-acetylmethionine. A Phosphoserine modification is found at serine 11. Residues lysine 31 and lysine 36 each carry the N6-succinyllysine modification. Residue serine 39 is modified to Phosphoserine. The residue at position 46 (lysine 46) is an N6-succinyllysine. At threonine 51 the chain carries Phosphothreonine. N6-succinyllysine is present on residues lysine 57 and lysine 78. N6-acetyllysine; alternate is present on lysine 84. Lysine 84 is modified (N6-succinyllysine; alternate). At lysine 90 the chain carries N6-succinyllysine. Residue serine 100 is modified to Phosphoserine. Residue lysine 121 is modified to N6-succinyllysine.

Belongs to the calycin superfamily. Fatty-acid binding protein (FABP) family.

Its subcellular location is the cytoplasm. In terms of biological role, plays a role in lipoprotein-mediated cholesterol uptake in hepatocytes. Binds cholesterol. Binds free fatty acids and their coenzyme A derivatives, bilirubin, and some other small molecules in the cytoplasm. May be involved in intracellular lipid transport. The polypeptide is Fatty acid-binding protein, liver (Fabp1) (Mus musculus (Mouse)).